Here is a 115-residue protein sequence, read N- to C-terminus: Large ribosomal subunit protein bL19 (115 aa).

This sequence belongs to the bacterial ribosomal protein bL19 family.

Its function is as follows. This protein is located at the 30S-50S ribosomal subunit interface and may play a role in the structure and function of the aminoacyl-tRNA binding site. This chain is Large ribosomal subunit protein bL19 (rplS), found in Thermotoga maritima (strain ATCC 43589 / DSM 3109 / JCM 10099 / NBRC 100826 / MSB8).